The following is a 1226-amino-acid chain: Phosphatidylinositol 3,4,5-trisphosphate 5-phosphatase 2B (1226 aa).

In terms of domain architecture, SH2 spans 6 to 102; the sequence is WYHRDISRVR…GLVAPLLYPV (97 aa). A disordered region spans residues 106-144; the sequence is SEANDESSDGDDEKPGSTFANSPPRAISPTATSPPSSSA. Acidic residues predominate over residues 108–117; it reads ANDESSDGDD. The segment covering 127 to 144 has biased composition (low complexity); that stretch reads SPPRAISPTATSPPSSSA. The NPXY motif motif lies at 906-909; it reads NPAY. Residue Y909 is modified to Phosphotyrosine. Disordered regions lie at residues 945–964 and 985–1035; these read RVTG…DFTE and SSAA…LSGK. Residues 1011–1025 are compositionally biased toward low complexity; that stretch reads HSSNSSLQLQSHKNN. One can recognise an SAM domain in the interval 1163–1226; it reads GAPETVRELL…ILENLPKIWD (64 aa).

It belongs to the inositol 1,4,5-trisphosphate 5-phosphatase family. In terms of processing, tyrosine phosphorylated by the members of the SRC family after exposure to a diverse array of extracellular stimuli.

It is found in the cytoplasm. Its subcellular location is the cytosol. The protein resides in the cytoskeleton. The protein localises to the membrane. It localises to the cell projection. It is found in the filopodium. Its subcellular location is the lamellipodium. The protein resides in the nucleus. The protein localises to the nucleus speckle. The enzyme catalyses a 1,2-diacyl-sn-glycero-3-phospho-(1D-myo-inositol-3,4,5-trisphosphate) + H2O = a 1,2-diacyl-sn-glycero-3-phospho-(1D-myo-inositol-3,4-bisphosphate) + phosphate. Its function is as follows. Phosphatidylinositol (PtdIns) phosphatase that specifically hydrolyzes the 5-phosphate of phosphatidylinositol-3,4,5-trisphosphate (PtdIns(3,4,5)P3) to produce PtdIns(3,4)P2, thereby negatively regulating the PI3K (phosphoinositide 3-kinase) pathways. Plays a central role in regulation of PI3K-dependent insulin signaling, although the precise molecular mechanisms and signaling pathways remain unclear. Part of a signaling pathway that regulates actin cytoskeleton remodeling. Required for the maintenance and dynamic remodeling of actin structures as well as in endocytosis, having a major impact on ligand-induced EGFR internalization and degradation. Participates in regulation of cortical and submembraneous actin. Regulates cell adhesion and cell spreading. Acts as a negative regulator of the FC-gamma-RIIA receptor (FCGR2A). Mediates signaling from the FC-gamma-RIIB receptor (FCGR2B), playing a central role in terminating signal transduction from activating immune/hematopoietic cell receptor systems. May also hydrolyze PtdIns(1,3,4,5)P4, and could thus affect the levels of the higher inositol polyphosphates like InsP6. The protein is Phosphatidylinositol 3,4,5-trisphosphate 5-phosphatase 2B (inppl1b) of Danio rerio (Zebrafish).